Reading from the N-terminus, the 585-residue chain is Membrane protein insertase YidC (585 aa).

6 helical membrane-spanning segments follow: residues 5 to 25 (SVTG…FMSP), 338 to 358 (FGWD…AFTW), 362 to 382 (FVSN…LVTY), 432 to 452 (LGGC…FYVF), 482 to 502 (IPMY…TVFL), and 518 to 538 (IMLY…PSGL).

This sequence belongs to the OXA1/ALB3/YidC family. Type 1 subfamily. As to quaternary structure, interacts with the Sec translocase complex via SecD. Specifically interacts with transmembrane segments of nascent integral membrane proteins during membrane integration.

Its subcellular location is the cell inner membrane. Functionally, required for the insertion and/or proper folding and/or complex formation of integral membrane proteins into the membrane. Involved in integration of membrane proteins that insert both dependently and independently of the Sec translocase complex, as well as at least some lipoproteins. Aids folding of multispanning membrane proteins. This is Membrane protein insertase YidC from Chlorobium luteolum (strain DSM 273 / BCRC 81028 / 2530) (Pelodictyon luteolum).